The sequence spans 275 residues: Nitrogenase iron protein 3 (275 aa).

Gly-9–Ser-16 is a binding site for ATP. Cys-97 provides a ligand contact to [4Fe-4S] cluster. Position 100 is an ADP-ribosylarginine; by dinitrogenase reductase ADP-ribosyltransferase (Arg-100). Cys-132 is a [4Fe-4S] cluster binding site.

Belongs to the NifH/BchL/ChlL family. In terms of assembly, homodimer. [4Fe-4S] cluster serves as cofactor. The reversible ADP-ribosylation of Arg-100 inactivates the nitrogenase reductase and regulates nitrogenase activity.

The catalysed reaction is N2 + 8 reduced [2Fe-2S]-[ferredoxin] + 16 ATP + 16 H2O = H2 + 8 oxidized [2Fe-2S]-[ferredoxin] + 2 NH4(+) + 16 ADP + 16 phosphate + 6 H(+). In terms of biological role, the key enzymatic reactions in nitrogen fixation are catalyzed by the nitrogenase complex, which has 2 components: the iron protein and the molybdenum-iron protein. This chain is Nitrogenase iron protein 3 (nifH3), found in Clostridium pasteurianum.